The primary structure comprises 1017 residues: Protein HIRA (1017 aa).

WD repeat units lie at residues 11–53 and 68–107; these read HNGK…QEDD and NHLA…GPST. Position 111 is a phosphoserine (S111). 5 WD repeats span residues 129–168, 172–211, 220–263, 266–322, and 326–367; these read NHSG…EILA, GHSG…LETS, GGTT…TNMD, GHRK…PLVV, and LFDK…DPLS. Residues 421-479 are interaction with ASF1A; it reads REMGSATSVAGVVNGESLEDIRKNLLKKQVETRTADGRRRITPLCIAQLDTGDFSTAFF. An interaction with CCNA1 region spans residues 421-729; the sequence is REMGSATSVA…RLKCNREGKE (309 aa). Residues 439-475 form a required for repression of histone gene transcription region; sequence EDIRKNLLKKQVETRTADGRRRITPLCIAQLDTGDFS. Positions 494 to 509 are enriched in low complexity; sequence SSHSSPQLLPLDSSTP. A disordered region spans residues 494 to 555; the sequence is SSHSSPQLLP…AALSPSVLTT (62 aa). Over residues 536-555 the composition is skewed to polar residues; the sequence is KDSMNATSTPAALSPSVLTT. The residue at position 549 (S549) is a Phosphoserine. T555 carries the phosphothreonine; by CDK2 modification. Position 557 is a phosphoserine (S557). Disordered regions lie at residues 570-589 and 604-625; these read TERS…TPTA and PRDL…KASS. Position 576 is a phosphothreonine (T576). At S584 the chain carries Phosphoserine. Phosphothreonine is present on T586. The interval 593–826 is interaction with histone H2B; it reads LKEQNLVKEL…LAGSDMTVSQ (234 aa). Interaction with PAX3 regions lie at residues 594–739 and 740–828; these read KEQN…SRIL and TAAG…SQIL. The span at 604-619 shows a compositional bias: basic and acidic residues; sequence PRDLLESSSDSDEKVP. A phosphoserine mark is found at S610, S611, S612, S614, S661, S675, and S687. Positions 738–1017 are interaction with histone H4; sequence ILTAAGSCDV…QEQLDILRDK (280 aa).

Belongs to the WD repeat HIR1 family. As to quaternary structure, interacts with histone H3-3B, PAX3 and PAX7. Interacts with histone H3.Y. Interacts with CCNA1, HIRIP3, NFU1/HIRIP5 and histone H2B. Part of a complex which includes ASF1A, CABIN1, histone H3.3, histone H4 and UBN1. Post-translationally, sumoylated. Phosphorylated by CDK2/CCNA1 and CDK2/CCNE1 on Thr-555 in vitro. Also phosphorylated on Thr-555 and Ser-687 in vivo. In terms of tissue distribution, expressed at high levels in kidney, pancreas and skeletal muscle and at lower levels in brain, heart, liver, lung, and placenta.

The protein localises to the nucleus. Its subcellular location is the PML body. Cooperates with ASF1A to promote replication-independent chromatin assembly. Required for the periodic repression of histone gene transcription during the cell cycle. Required for the formation of senescence-associated heterochromatin foci (SAHF) and efficient senescence-associated cell cycle exit. This Homo sapiens (Human) protein is Protein HIRA (HIRA).